The sequence spans 332 residues: 2-hydroxyacid dehydrogenase homolog 1 (332 aa).

NAD(+)-binding positions include 154–155, 233–235, and Asp-259; these read RI and TSR. Arg-235 is a catalytic residue. Glu-264 is an active-site residue. Residue His-296 is the Proton donor of the active site. 296–299 lines the NAD(+) pocket; sequence HQAF.

It belongs to the D-isomer specific 2-hydroxyacid dehydrogenase family.

The protein localises to the cytoplasm. It localises to the nucleus. In Schizosaccharomyces pombe (strain 972 / ATCC 24843) (Fission yeast), this protein is 2-hydroxyacid dehydrogenase homolog 1.